The following is a 437-amino-acid chain: GTPase Der (437 aa).

2 consecutive EngA-type G domains span residues 4-168 (NIVA…PEKP) and 178-353 (PRFA…ENRK). GTP is bound by residues 10–17 (GRPNVGKS), 57–61 (DTGGY), 120–123 (NKVD), 184–191 (GRPNAGKS), 231–235 (DTAGI), and 296–299 (NKWD). Residues 354-437 (QRISTSKFNE…VPIDIYIREK (84 aa)) enclose the KH-like domain.

Belongs to the TRAFAC class TrmE-Era-EngA-EngB-Septin-like GTPase superfamily. EngA (Der) GTPase family. As to quaternary structure, associates with the 50S ribosomal subunit.

In terms of biological role, GTPase that plays an essential role in the late steps of ribosome biogenesis. The polypeptide is GTPase Der (Flavobacterium johnsoniae (strain ATCC 17061 / DSM 2064 / JCM 8514 / BCRC 14874 / CCUG 350202 / NBRC 14942 / NCIMB 11054 / UW101) (Cytophaga johnsonae)).